The primary structure comprises 77 residues: Large ribosomal subunit protein bL28 (77 aa).

Residues 1–26 (MARVCKVTGKRPMSGNNVSHANNKTK) are disordered.

Belongs to the bacterial ribosomal protein bL28 family.

This is Large ribosomal subunit protein bL28 from Neisseria gonorrhoeae (strain ATCC 700825 / FA 1090).